Reading from the N-terminus, the 264-residue chain is Fibroblast growth factor 5 (264 aa).

The first 20 residues, 1-20, serve as a signal peptide directing secretion; that stretch reads MSLSLLFLIFCSHLIHSAWA. The segment at 25 to 81 is disordered; that stretch reads RLTPEGQPAPPRNPGDSSGSRGRSSATFSSSSASSPVAASPGSQGSGSEHSSFQWSP. Positions 38–72 are enriched in low complexity; it reads PGDSSGSRGRSSATFSSSSASSPVAASPGSQGSGS. An N-linked (GlcNAc...) asparagine glycan is attached at Asn-108. Residues 227–254 are disordered; that stretch reads FTVTVPEKKKPPVKPKVPLSQPRRSPSP.

This sequence belongs to the heparin-binding growth factors family. In terms of assembly, interacts with FGFR1 and FGFR2. Affinity between fibroblast growth factors (FGFs) and their receptors is increased by heparan sulfate glycosaminoglycans that function as coreceptors.

The protein resides in the secreted. Plays an important role in the regulation of cell proliferation and cell differentiation. Required for normal regulation of the hair growth cycle. Functions as an inhibitor of hair elongation by promoting progression from anagen, the growth phase of the hair follicle, into catagen the apoptosis-induced regression phase. The chain is Fibroblast growth factor 5 (Fgf5) from Mus musculus (Mouse).